Consider the following 356-residue polypeptide: MSELKNDRFLRALMRQPVDVTPVWMMRQAGRYLPEYRASRARAGSFMDLCKNAEFACEVTLQPLERFELDAAILFSDILTIPDAMGLGLYFETGEGPRFKKTVRTEADVNALHMPDADTDLGYVMNAVRTIRRELNGRVPLIGFSGSPWTLATYMVEGGSSKDFREIKKLAYGQPELLHLLLDKLADSVADYLNAQIRAGAQAVQIFDTWGGALTAAGYLEFSLAYMKKIVSKLQREADGRPVPVILFTKNGGQWLEHIADAGADALGLDWTTEISEARRRVGDRVSLQGNMDPAALYAPPAAIRDQVSRILASFGSGSGHVFNLGHGITPDVDPEHAKVFIDAVHELSAPYHQNA.

Residues 27–31 (RQAGR), aspartate 77, tyrosine 154, threonine 209, and histidine 327 contribute to the substrate site.

This sequence belongs to the uroporphyrinogen decarboxylase family. Homodimer.

It localises to the cytoplasm. The enzyme catalyses uroporphyrinogen III + 4 H(+) = coproporphyrinogen III + 4 CO2. The protein operates within porphyrin-containing compound metabolism; protoporphyrin-IX biosynthesis; coproporphyrinogen-III from 5-aminolevulinate: step 4/4. Functionally, catalyzes the decarboxylation of four acetate groups of uroporphyrinogen-III to yield coproporphyrinogen-III. This chain is Uroporphyrinogen decarboxylase, found in Hahella chejuensis (strain KCTC 2396).